The following is a 247-amino-acid chain: Carboxy-S-adenosyl-L-methionine synthase (247 aa).

S-adenosyl-L-methionine is bound by residues Tyr-39, 64-66 (GCS), 89-90 (DN), 117-118 (DI), Asn-132, and Arg-199.

The protein belongs to the class I-like SAM-binding methyltransferase superfamily. Cx-SAM synthase family. Homodimer.

It carries out the reaction prephenate + S-adenosyl-L-methionine = carboxy-S-adenosyl-L-methionine + 3-phenylpyruvate + H2O. In terms of biological role, catalyzes the conversion of S-adenosyl-L-methionine (SAM) to carboxy-S-adenosyl-L-methionine (Cx-SAM). The sequence is that of Carboxy-S-adenosyl-L-methionine synthase from Salmonella arizonae (strain ATCC BAA-731 / CDC346-86 / RSK2980).